The chain runs to 142 residues: Large ribosomal subunit protein uL11 (142 aa).

It belongs to the universal ribosomal protein uL11 family. As to quaternary structure, part of the ribosomal stalk of the 50S ribosomal subunit. Interacts with L10 and the large rRNA to form the base of the stalk. L10 forms an elongated spine to which L12 dimers bind in a sequential fashion forming a multimeric L10(L12)X complex. One or more lysine residues are methylated.

In terms of biological role, forms part of the ribosomal stalk which helps the ribosome interact with GTP-bound translation factors. The protein is Large ribosomal subunit protein uL11 of Pasteurella multocida (strain Pm70).